Here is a 457-residue protein sequence, read N- to C-terminus: ATP synthase subunit beta (457 aa).

147–154 (GGAGVGKT) lines the ATP pocket.

It belongs to the ATPase alpha/beta chains family. As to quaternary structure, F-type ATPases have 2 components, CF(1) - the catalytic core - and CF(0) - the membrane proton channel. CF(1) has five subunits: alpha(3), beta(3), gamma(1), delta(1), epsilon(1). CF(0) has three main subunits: a(1), b(2) and c(9-12). The alpha and beta chains form an alternating ring which encloses part of the gamma chain. CF(1) is attached to CF(0) by a central stalk formed by the gamma and epsilon chains, while a peripheral stalk is formed by the delta and b chains.

It localises to the cell inner membrane. The catalysed reaction is ATP + H2O + 4 H(+)(in) = ADP + phosphate + 5 H(+)(out). Functionally, produces ATP from ADP in the presence of a proton gradient across the membrane. The catalytic sites are hosted primarily by the beta subunits. The protein is ATP synthase subunit beta of Haemophilus influenzae (strain PittGG).